The chain runs to 345 residues: N-acetyl-gamma-glutamyl-phosphate reductase (345 aa).

Cys149 is an active-site residue.

This sequence belongs to the NAGSA dehydrogenase family. Type 1 subfamily.

It is found in the cytoplasm. It catalyses the reaction N-acetyl-L-glutamate 5-semialdehyde + phosphate + NADP(+) = N-acetyl-L-glutamyl 5-phosphate + NADPH + H(+). The protein operates within amino-acid biosynthesis; L-arginine biosynthesis; N(2)-acetyl-L-ornithine from L-glutamate: step 3/4. Catalyzes the NADPH-dependent reduction of N-acetyl-5-glutamyl phosphate to yield N-acetyl-L-glutamate 5-semialdehyde. This chain is N-acetyl-gamma-glutamyl-phosphate reductase, found in Geobacillus sp. (strain WCH70).